Consider the following 207-residue polypeptide: Small ribosomal subunit protein uS4 (207 aa).

Residues 31–54 (KCKLDSKPGQHGRTSGARTSDYGN) are disordered. The span at 42–53 (GRTSGARTSDYG) shows a compositional bias: polar residues. The region spanning 97 to 160 (SRLDNVVYRM…KKQVRIAEAL (64 aa)) is the S4 RNA-binding domain.

This sequence belongs to the universal ribosomal protein uS4 family. Part of the 30S ribosomal subunit. Contacts protein S5. The interaction surface between S4 and S5 is involved in control of translational fidelity.

Functionally, one of the primary rRNA binding proteins, it binds directly to 16S rRNA where it nucleates assembly of the body of the 30S subunit. Its function is as follows. With S5 and S12 plays an important role in translational accuracy. This Cupriavidus metallidurans (strain ATCC 43123 / DSM 2839 / NBRC 102507 / CH34) (Ralstonia metallidurans) protein is Small ribosomal subunit protein uS4.